The chain runs to 318 residues: tRNA dimethylallyltransferase (318 aa).

21 to 28 (GPTATGKS) contacts ATP. 23–28 (TATGKS) is a binding site for substrate. Residues 46-49 (DSMQ) are interaction with substrate tRNA.

It belongs to the IPP transferase family. Monomer. Mg(2+) is required as a cofactor.

The catalysed reaction is adenosine(37) in tRNA + dimethylallyl diphosphate = N(6)-dimethylallyladenosine(37) in tRNA + diphosphate. Functionally, catalyzes the transfer of a dimethylallyl group onto the adenine at position 37 in tRNAs that read codons beginning with uridine, leading to the formation of N6-(dimethylallyl)adenosine (i(6)A). In Acidothermus cellulolyticus (strain ATCC 43068 / DSM 8971 / 11B), this protein is tRNA dimethylallyltransferase.